Here is a 271-residue protein sequence, read N- to C-terminus: Chymotrypsin BII (271 aa).

The signal sequence occupies residues 1 to 15 (MIGKLSLLLVCVAVA). Positions 16-45 (SGNPAAGKPWHWKSPKPLVDPRIHVNATPR) are cleaved as a propeptide — activation peptide. In terms of domain architecture, Peptidase S1 spans 46-268 (IVGGVEATPH…YLDWIEQKTG (223 aa)). A disulfide bond links Cys-71 and Cys-87. Active-site charge relay system residues include His-86 and Asp-132. Cystine bridges form between Cys-196-Cys-209 and Cys-219-Cys-245. Ser-223 serves as the catalytic Charge relay system.

This sequence belongs to the peptidase S1 family.

Its subcellular location is the secreted. The protein resides in the extracellular space. It carries out the reaction Preferential cleavage: Tyr-|-Xaa, Trp-|-Xaa, Phe-|-Xaa, Leu-|-Xaa.. In terms of biological role, serine protease with chymotryptic and collagenolytic activities. This chain is Chymotrypsin BII, found in Penaeus vannamei (Whiteleg shrimp).